A 363-amino-acid chain; its full sequence is Pyrimidine monooxygenase RutA (363 aa).

FMN contacts are provided by residues 49 to 50 (IK), Asn-115, Glu-124, 140 to 141 (RY), and Ser-190.

Belongs to the NtaA/SnaA/DszA monooxygenase family. RutA subfamily.

It carries out the reaction uracil + FMNH2 + NADH + O2 = (Z)-3-ureidoacrylate + FMN + NAD(+) + H2O + H(+). It catalyses the reaction thymine + FMNH2 + NADH + O2 = (Z)-2-methylureidoacrylate + FMN + NAD(+) + H2O + H(+). In terms of biological role, catalyzes the pyrimidine ring opening between N-3 and C-4 by an unusual flavin hydroperoxide-catalyzed mechanism, adding oxygen atoms in the process to yield ureidoacrylate peracid, that immediately reacts with FMN forming ureidoacrylate and FMN-N(5)-oxide. The FMN-N(5)-oxide reacts spontaneously with NADH to produce FMN. Requires the flavin reductase RutF to regenerate FMN in vivo. The sequence is that of Pyrimidine monooxygenase RutA from Rhizobium rhizogenes (strain K84 / ATCC BAA-868) (Agrobacterium radiobacter).